The sequence spans 163 residues: Nucleotide-binding protein Cla_1551 (163 aa).

It belongs to the YajQ family.

Nucleotide-binding protein. The chain is Nucleotide-binding protein Cla_1551 from Campylobacter lari (strain RM2100 / D67 / ATCC BAA-1060).